The primary structure comprises 405 residues: UDP-N-acetylglucosamine--N-acetylmuramyl-(pentapeptide) pyrophosphoryl-undecaprenol N-acetylglucosamine transferase (405 aa).

Residues 11 to 13, N127, R168, S191, I248, and Q293 each bind UDP-N-acetyl-alpha-D-glucosamine; that span reads TGG.

Belongs to the glycosyltransferase 28 family. MurG subfamily.

Its subcellular location is the cell inner membrane. It catalyses the reaction di-trans,octa-cis-undecaprenyl diphospho-N-acetyl-alpha-D-muramoyl-L-alanyl-D-glutamyl-meso-2,6-diaminopimeloyl-D-alanyl-D-alanine + UDP-N-acetyl-alpha-D-glucosamine = di-trans,octa-cis-undecaprenyl diphospho-[N-acetyl-alpha-D-glucosaminyl-(1-&gt;4)]-N-acetyl-alpha-D-muramoyl-L-alanyl-D-glutamyl-meso-2,6-diaminopimeloyl-D-alanyl-D-alanine + UDP + H(+). It participates in cell wall biogenesis; peptidoglycan biosynthesis. In terms of biological role, cell wall formation. Catalyzes the transfer of a GlcNAc subunit on undecaprenyl-pyrophosphoryl-MurNAc-pentapeptide (lipid intermediate I) to form undecaprenyl-pyrophosphoryl-MurNAc-(pentapeptide)GlcNAc (lipid intermediate II). This Sorangium cellulosum (strain So ce56) (Polyangium cellulosum (strain So ce56)) protein is UDP-N-acetylglucosamine--N-acetylmuramyl-(pentapeptide) pyrophosphoryl-undecaprenol N-acetylglucosamine transferase.